We begin with the raw amino-acid sequence, 460 residues long: Putative glycoside/cation symporter YagG (460 aa).

Topologically, residues 1-9 (MTQLTMKDK) are cytoplasmic. The next 2 helical transmembrane spans lie at 10–30 (IGYG…MFLL) and 31–51 (AYFY…LFLV). The Cytoplasmic portion of the chain corresponds to 52-78 (SRVLDAVTDPLMGLLVDRTRTRHGQFR). A helical membrane pass occupies residues 79–99 (PFLLWGAIPFGIVCVLTFYTP). Topologically, residues 100–106 (DFSAQGK) are periplasmic. Residues 107 to 127 (IIYACVTYILLTLVYTFVNVP) form a helical membrane-spanning segment. Residues 128–150 (YCAMPGVITADPKERHALQSWRF) are Cytoplasmic-facing. The helical transmembrane segment at 151 to 171 (FLAAAGSLAISGIALPLVSII) threads the bilayer. At 172 to 179 (GKGDEQVG) the chain is on the periplasmic side. Residues 180 to 200 (YFGAMCVLGLSGVVLLYVCFF) traverse the membrane as a helical segment. The Cytoplasmic portion of the chain corresponds to 201 to 262 (TTKERYTFEV…FVKYVMDHPE (62 aa)). Residues 263-283 (LATQFLLYGSLATMFGSLCSS) traverse the membrane as a helical segment. Residues 284–308 (RLLGRFDRVTAFKWIIVAYSLISLL) are Periplasmic-facing. Residues 309 to 329 (IFVTPAEHIALIFALNILFLF) traverse the membrane as a helical segment. Topologically, residues 330–366 (VFNTTTPLQWLMASDVVDYEESRSGRRLDGLVFSTYL) are cytoplasmic. Residues 367–387 (FSLKIGLAIGGAVVGWILAYV) traverse the membrane as a helical segment. The Periplasmic portion of the chain corresponds to 388 to 405 (NYSASSSVQPVEVLTTIK). The chain crosses the membrane as a helical span at residues 406-426 (ILFCVVPVVLYAGMFIMLSLY). At 427-460 (KLTDARVEAISRQLIKHRAAQGEAVPDAATAASH) the chain is on the cytoplasmic side.

This sequence belongs to the sodium:galactoside symporter (TC 2.A.2) family.

Its subcellular location is the cell inner membrane. The protein is Putative glycoside/cation symporter YagG (yagG) of Escherichia coli (strain K12).